A 989-amino-acid chain; its full sequence is MSTTSDFQTGERVRVAHQGNPQSSSLQADMDAKKALLSQNLNNGHLTARPPRTTGPGIKYGEKKPKKQKGSDDDDEDYVDETMPSEDEEDFDNNEEDEDDDDYEEEGPRKRKAPSKKKLVYPRENYRREDSETPEPEMKRIRTLSDSSDDEWMTKPRLNGSESPIGNVMRTQMAKRSAASKRKIVIDDESEDDFINDEEISEKGSGKGSEKEESEGSGKDSETEEVTMKQGQSLKAAMAKAQKEQKKKAESDEDWEEDEDDMNADGDETPSDDSDIEERRAKRGETKNQKECREFFNKAKKEDLLQQARINDKIADFVLANRPFEIYGAMVAKMKGVTRGTNAIEAYMEFLEKRGILSRILDDCKDHAHTVTKDFERCTEGPLQLPLLKEGCTLHDYQLIGVKWLIMMYNKDLNAILGDEMGLGKTIQIVAFLSYLKQIGKTGPHLIVVPSSTIENWIGEFHKWCPSIQLLTYYGSQDERKHLRHRVKKQKDHIDVILTTYNMVTSKSDDKKFFKNFSLNYVIYDEGHMLKNCDSERYRGLMKVKGKKKILLTGTPLQNNLIELISLMYFVLSKVFNKYCEDITHLLQHFKQLGPALDTKNKALYQQDRIEEAKAILQPYILRRLKNQVLGSLPSKSEQIIEVEMKKPQKQLYDNIVEALQQSEESGDSYGSLMRLRQAANHPLLRRSEYTDQKLDKIAKMLCLREKAYADKKWQHVSEDLAWLSDIKIHQLCERFRCTSKFLLNEQLALKSGKCEQLDVMLPEIQKKGDKVLIFSQFTSMLDILEVYLNIRGYSYKRLDGQTPVLDRQEMINEFNLSKDLFVFLLSTRAGGLGINLTSANHIIIHDIDFNPYNDKQAEDRCHRMGQEKPVHVTRLVSKGTVEVGMLALAKKKLQLEKQVTDGVKGQLDEDALRELKEEEGGEQCGGRDLSKLLSSAISGRYDDVEDDSGDSKNGIDAEEAAKKEDEAVKEPVEKEQQKEEESQPSTSA.

The disordered stretch occupies residues 1-288; the sequence is MSTTSDFQTG…RRAKRGETKN (288 aa). Residues 72–105 show a composition bias toward acidic residues; the sequence is DDDDEDYVDETMPSEDEEDFDNNEEDEDDDDYEE. Over residues 109-120 the composition is skewed to basic residues; that stretch reads RKRKAPSKKKLV. Residues 124 to 140 show a composition bias toward basic and acidic residues; that stretch reads ENYRREDSETPEPEMKR. Residues 187 to 200 show a composition bias toward acidic residues; the sequence is DDESEDDFINDEEI. Composition is skewed to basic and acidic residues over residues 201–221 and 241–250; these read SEKGSGKGSEKEESEGSGKDS and AQKEQKKKAE. Residues 251-276 show a composition bias toward acidic residues; it reads SDEDWEEDEDDMNADGDETPSDDSDI. Positions 277-288 are enriched in basic and acidic residues; sequence EERRAKRGETKN. Positions 406–574 constitute a Helicase ATP-binding domain; sequence IMMYNKDLNA…ISLMYFVLSK (169 aa). 419-426 is a binding site for ATP; sequence DEMGLGKT. Residues 525–528 carry the DEGH box motif; sequence DEGH. The region spanning 757–912 is the Helicase C-terminal domain; the sequence is QLDVMLPEIQ…GVKGQLDEDA (156 aa). Residues 941–989 are disordered; it reads RYDDVEDDSGDSKNGIDAEEAAKKEDEAVKEPVEKEQQKEEESQPSTSA. The span at 950 to 982 shows a compositional bias: basic and acidic residues; that stretch reads GDSKNGIDAEEAAKKEDEAVKEPVEKEQQKEEE.

It belongs to the SNF2/RAD54 helicase family.

It localises to the nucleus. The protein localises to the chromosome. It catalyses the reaction ATP + H2O = ADP + phosphate + H(+). DNA helicase that possesses intrinsic ATP-dependent nucleosome-remodeling activity and is both required for DNA repair and heterochromatin organization. Promotes DNA end resection of double-strand breaks (DSBs) following DNA damage: probably acts by weakening histone DNA interactions in nucleosomes flanking DSBs. In Caenorhabditis elegans, this protein is SWI/SNF-related matrix-associated actin-dependent regulator of chromatin subfamily A containing DEAD/H box 1 homolog.